Reading from the N-terminus, the 258-residue chain is Imidazole glycerol phosphate synthase subunit HisF (258 aa).

Active-site residues include D11 and D130.

It belongs to the HisA/HisF family. Heterodimer of HisH and HisF.

Its subcellular location is the cytoplasm. It catalyses the reaction 5-[(5-phospho-1-deoxy-D-ribulos-1-ylimino)methylamino]-1-(5-phospho-beta-D-ribosyl)imidazole-4-carboxamide + L-glutamine = D-erythro-1-(imidazol-4-yl)glycerol 3-phosphate + 5-amino-1-(5-phospho-beta-D-ribosyl)imidazole-4-carboxamide + L-glutamate + H(+). It participates in amino-acid biosynthesis; L-histidine biosynthesis; L-histidine from 5-phospho-alpha-D-ribose 1-diphosphate: step 5/9. In terms of biological role, IGPS catalyzes the conversion of PRFAR and glutamine to IGP, AICAR and glutamate. The HisF subunit catalyzes the cyclization activity that produces IGP and AICAR from PRFAR using the ammonia provided by the HisH subunit. The sequence is that of Imidazole glycerol phosphate synthase subunit HisF from Yersinia pestis (strain Pestoides F).